Here is a 76-residue protein sequence, read N- to C-terminus: Small ribosomal subunit protein bS18 (76 aa).

This sequence belongs to the bacterial ribosomal protein bS18 family. Part of the 30S ribosomal subunit. Forms a tight heterodimer with protein bS6.

Binds as a heterodimer with protein bS6 to the central domain of the 16S rRNA, where it helps stabilize the platform of the 30S subunit. This Desulfitobacterium hafniense (strain Y51) protein is Small ribosomal subunit protein bS18.